A 402-amino-acid polypeptide reads, in one-letter code: UPF0261 protein mll9388 (402 aa).

The protein belongs to the UPF0261 family.

The chain is UPF0261 protein mll9388 from Mesorhizobium japonicum (strain LMG 29417 / CECT 9101 / MAFF 303099) (Mesorhizobium loti (strain MAFF 303099)).